We begin with the raw amino-acid sequence, 265 residues long: Synaptoporin (265 aa).

Residues Met1–Val4 lie on the Cytoplasmic side of the membrane. Positions Met1–Gly202 constitute an MARVEL domain. The helical transmembrane segment at Ile5–Leu25 threads the bilayer. Residues Arg26 to Phe81 lie on the Vesicular side of the membrane. N-linked (GlcNAc...) asparagine glycosylation is found at Asn33 and Asn38. The chain crosses the membrane as a helical span at residues Phe82–Phe102. Topologically, residues Phe103 to Pro114 are cytoplasmic. Residues Leu115–Trp135 traverse the membrane as a helical segment. Topologically, residues Ala136–Asn177 are vesicular. Residues Thr178–Phe198 traverse the membrane as a helical segment. Topologically, residues Lys199–Ile265 are cytoplasmic. 5 consecutive repeat copies span residues Tyr210 to Pro214, Tyr222 to Arg226, Tyr227 to Ser231, Tyr232 to Gly236, and Tyr238 to Ala242. Residues Tyr210–Ala242 are 5 X approximate repeats. A Phosphoserine modification is found at Ser212. Positions Ser221–Glu230 are enriched in polar residues. The segment at Ser221 to Ile265 is disordered. Positions Gln240–Ile265 are enriched in polar residues.

It belongs to the synaptophysin/synaptobrevin family.

It is found in the cytoplasmic vesicle. The protein resides in the secretory vesicle. Its subcellular location is the synaptic vesicle membrane. It localises to the synapse. The protein localises to the synaptosome. In terms of biological role, intrinsic membrane protein of small synaptic vesicles. Probable vesicular channel protein. This chain is Synaptoporin (Synpr), found in Mus musculus (Mouse).